The following is a 259-amino-acid chain: Ribonuclease HII (259 aa).

In terms of domain architecture, RNase H type-2 spans 70 to 258 (TLIAGIDEVG…VKSLVLGKKE (189 aa)). Aspartate 76, glutamate 77, and aspartate 168 together coordinate a divalent metal cation.

This sequence belongs to the RNase HII family. Mn(2+) is required as a cofactor. Requires Mg(2+) as cofactor.

It localises to the cytoplasm. The enzyme catalyses Endonucleolytic cleavage to 5'-phosphomonoester.. Its function is as follows. Endonuclease that specifically degrades the RNA of RNA-DNA hybrids. This Streptococcus pneumoniae (strain Taiwan19F-14) protein is Ribonuclease HII.